The primary structure comprises 505 residues: Maturase K (505 aa).

This sequence belongs to the intron maturase 2 family. MatK subfamily.

It is found in the plastid. Its subcellular location is the chloroplast. Its function is as follows. Usually encoded in the trnK tRNA gene intron. Probably assists in splicing its own and other chloroplast group II introns. In Micranthes integrifolia (Wholeleaf saxifrage), this protein is Maturase K.